The primary structure comprises 130 residues: Small ribosomal subunit protein uS8 (130 aa).

It belongs to the universal ribosomal protein uS8 family. Part of the 30S ribosomal subunit.

In terms of biological role, one of the primary rRNA binding proteins, it binds directly to 16S rRNA central domain where it helps coordinate assembly of the platform of the 30S subunit. In Methanococcus maripaludis (strain C6 / ATCC BAA-1332), this protein is Small ribosomal subunit protein uS8.